Reading from the N-terminus, the 111-residue chain is Cornifelin homolog B (111 aa).

Belongs to the cornifelin family.

This chain is Cornifelin homolog B (cnfn-b), found in Xenopus laevis (African clawed frog).